Here is an 89-residue protein sequence, read N- to C-terminus: Co-chaperonin GroES (89 aa).

The protein belongs to the GroES chaperonin family. Heptamer of 7 subunits arranged in a ring. Interacts with the chaperonin GroEL.

It is found in the cytoplasm. In terms of biological role, together with the chaperonin GroEL, plays an essential role in assisting protein folding. The GroEL-GroES system forms a nano-cage that allows encapsulation of the non-native substrate proteins and provides a physical environment optimized to promote and accelerate protein folding. GroES binds to the apical surface of the GroEL ring, thereby capping the opening of the GroEL channel. In Wolinella succinogenes (strain ATCC 29543 / DSM 1740 / CCUG 13145 / JCM 31913 / LMG 7466 / NCTC 11488 / FDC 602W) (Vibrio succinogenes), this protein is Co-chaperonin GroES.